A 749-amino-acid chain; its full sequence is Protein kinase domain-containing protein ppk32 (749 aa).

The Protein kinase domain occupies 21-317 (IQKENSVQVG…MFELERSPYF (297 aa)). Disordered stretches follow at residues 598 to 677 (KKLQ…VTAK) and 706 to 749 (PLIP…KSLL). A compositionally biased stretch (polar residues) spans 602–651 (SKPSSVVPNRITTDPFSSQTKEATSKPSSISPNKATTNIFTSQASLSSQG). Residue Ser632 is modified to Phosphoserine. Low complexity-rich tracts occupy residues 657-670 (SSASSYRSYSQRAS) and 721-735 (NRRVTTPVVNQNTVT).

The protein resides in the cytoplasm. The chain is Protein kinase domain-containing protein ppk32 (ppk32) from Schizosaccharomyces pombe (strain 972 / ATCC 24843) (Fission yeast).